Consider the following 362-residue polypeptide: Chorismate synthase (362 aa).

Arg-46 lines the NADP(+) pocket. FMN is bound by residues 122–124 (RSS), 238–239 (NA), Gly-278, 293–297 (KPTPS), and Arg-319.

The protein belongs to the chorismate synthase family. In terms of assembly, homotetramer. It depends on FMNH2 as a cofactor.

The enzyme catalyses 5-O-(1-carboxyvinyl)-3-phosphoshikimate = chorismate + phosphate. Its pathway is metabolic intermediate biosynthesis; chorismate biosynthesis; chorismate from D-erythrose 4-phosphate and phosphoenolpyruvate: step 7/7. Functionally, catalyzes the anti-1,4-elimination of the C-3 phosphate and the C-6 proR hydrogen from 5-enolpyruvylshikimate-3-phosphate (EPSP) to yield chorismate, which is the branch point compound that serves as the starting substrate for the three terminal pathways of aromatic amino acid biosynthesis. This reaction introduces a second double bond into the aromatic ring system. The sequence is that of Chorismate synthase from Campylobacter jejuni subsp. doylei (strain ATCC BAA-1458 / RM4099 / 269.97).